Reading from the N-terminus, the 257-residue chain is MKSVDHPVDVLPAEHSAETPGDARASESSLLISETFVSRQGEGELTGTESVFIRTSGCNLRCWFCDTPYASWKPEGTRQTIEDLLQLVAKSGVKHVVLTGGEPLIAKGIVSLIDQLRSAGNHVTIETAGTVDPGARCDLLSLSPKLRASTPDAKDHPRLAKMHAERRLPINTMKQLIQSAEATQVKFVVDSADELPEIDEVVRQLEIAADAVYLMPQGISVEQLDAARPWLEPMAISRGYQYCDRMQIRWFGNRRGT.

The disordered stretch occupies residues 1–25; it reads MKSVDHPVDVLPAEHSAETPGDARA. Substrate contacts are provided by residues 39–41 and Arg-54; that span reads RQG. One can recognise a Radical SAM core domain in the interval 45-244; the sequence is LTGTESVFIR…AISRGYQYCD (200 aa). The [4Fe-4S] cluster site is built by Cys-58, Cys-62, and Cys-65. Position 67 (Thr-67) interacts with Mg(2+). Thr-99 contributes to the substrate binding site. S-adenosyl-L-methionine-binding positions include Gly-101 and 143–145; that span reads SPK.

This sequence belongs to the radical SAM superfamily. 7-carboxy-7-deazaguanine synthase family. As to quaternary structure, homodimer. The cofactor is [4Fe-4S] cluster. S-adenosyl-L-methionine is required as a cofactor. Mg(2+) serves as cofactor.

The catalysed reaction is 6-carboxy-5,6,7,8-tetrahydropterin + H(+) = 7-carboxy-7-deazaguanine + NH4(+). It functions in the pathway purine metabolism; 7-cyano-7-deazaguanine biosynthesis. Catalyzes the complex heterocyclic radical-mediated conversion of 6-carboxy-5,6,7,8-tetrahydropterin (CPH4) to 7-carboxy-7-deazaguanine (CDG), a step common to the biosynthetic pathways of all 7-deazapurine-containing compounds. The polypeptide is 7-carboxy-7-deazaguanine synthase (Rhodopirellula baltica (strain DSM 10527 / NCIMB 13988 / SH1)).